The following is a 260-amino-acid chain: GTP cyclohydrolase FolE2 (260 aa).

The protein belongs to the GTP cyclohydrolase IV family.

It carries out the reaction GTP + H2O = 7,8-dihydroneopterin 3'-triphosphate + formate + H(+). It participates in cofactor biosynthesis; 7,8-dihydroneopterin triphosphate biosynthesis; 7,8-dihydroneopterin triphosphate from GTP: step 1/1. Its function is as follows. Converts GTP to 7,8-dihydroneopterin triphosphate. In Desulfosudis oleivorans (strain DSM 6200 / JCM 39069 / Hxd3) (Desulfococcus oleovorans), this protein is GTP cyclohydrolase FolE2.